Consider the following 277-residue polypeptide: Chitosanase (277 aa).

An N-terminal signal peptide occupies residues 1 to 35; it reads MKISMQKADFWKKAAISLLVFTMFFTLMMSETVFA. Glu54 functions as the Proton donor in the catalytic mechanism. Asp70 serves as the catalytic Nucleophile.

The protein belongs to the glycosyl hydrolase 46 family.

Its subcellular location is the secreted. It carries out the reaction Endohydrolysis of beta-(1-&gt;4)-linkages between D-glucosamine residues in a partly acetylated chitosan.. In terms of biological role, aids in the defense against invading fungal pathogens by degrading their cell wall chitosan. This Bacillus subtilis (strain 168) protein is Chitosanase (csn).